The chain runs to 875 residues: Phosphoenolpyruvate carboxylase (875 aa).

Catalysis depends on residues His137 and Lys542.

Belongs to the PEPCase type 1 family. Requires Mg(2+) as cofactor.

It carries out the reaction oxaloacetate + phosphate = phosphoenolpyruvate + hydrogencarbonate. Forms oxaloacetate, a four-carbon dicarboxylic acid source for the tricarboxylic acid cycle. This is Phosphoenolpyruvate carboxylase from Pseudomonas putida (strain ATCC 700007 / DSM 6899 / JCM 31910 / BCRC 17059 / LMG 24140 / F1).